A 1649-amino-acid chain; its full sequence is PHD and RING finger domain-containing protein 1 (1649 aa).

Positions 1–79 (MDDDSLDELV…RSGSEDSEDD (79 aa)) are disordered. Phosphoserine is present on Ser5. A compositionally biased stretch (acidic residues) spans 54 to 79 (TDGEDEGASEEEDLEDRSGSEDSEDD). The RING-type; degenerate zinc finger occupies 108-149 (CPICLNAFRDQAVGTPENCAHYFCLDCIVEWSKNANSCPVDR). The PHD-type zinc finger occupies 183-233 (PTFCEVCGRSDREDRLLLCDGCDAGYHMECLDPPLQEVPVDEWFCPECAAP). Residues 324-398 (VYQRPLTPRT…TRSRIARTLG (75 aa)) are disordered. The residue at position 330 (Thr330) is a Phosphothreonine. Residues 334–353 (PARRKRKTRRRKKVPGRKKT) show a composition bias toward basic residues. A compositionally biased stretch (low complexity) spans 354–366 (PSGPSAKSKSSAT). A compositionally biased stretch (basic residues) spans 367-382 (RSKKRQHRVKKRRGKK). Ser445 and Ser455 each carry phosphoserine. 4 disordered regions span residues 534–600 (KRAA…GAPV), 644–871 (SAAS…PKAQ), 888–1240 (FGTE…KAPL), and 1281–1395 (IQLD…PLLR). Residues 568-589 (SPAQGPSGNRPQSTGLSCQGRS) are compositionally biased toward polar residues. Composition is skewed to basic and acidic residues over residues 685-697 (IRRD…RDAA) and 727-742 (TRAE…REPG). Positions 786 to 796 (AHSSQLSSPGF) are enriched in polar residues. Residues 802–812 (PVDDKEQRKEN) show a composition bias toward basic and acidic residues. Phosphoserine is present on residues Ser814, Ser845, Ser846, Ser864, Ser867, and Ser915. 2 stretches are compositionally biased toward polar residues: residues 835–848 (PTGS…SSPE) and 859–871 (ITRT…PKAQ). Thr917 bears the Phosphothreonine mark. Residues Ser936, Ser973, and Ser991 each carry the phosphoserine modification. Positions 988–999 (RPPSRSRSTSSS) are enriched in low complexity. A compositionally biased stretch (basic residues) spans 1000–1011 (RSRKKAKRKRVS). Basic and acidic residues predominate over residues 1012 to 1030 (REHGRTRSGTRSESRDRSS). The span at 1043-1053 (RRQRSKAKSRR) shows a compositional bias: basic residues. A compositionally biased stretch (basic and acidic residues) spans 1054–1063 (SSSDRSSSRE). Residues 1064 to 1090 (RAKRKKAKDKSREHRRGPWGHSRRTSR) show a composition bias toward basic residues. A compositionally biased stretch (low complexity) spans 1091–1101 (SRSGSPGSSSY). Residues 1106-1118 (SRKKKKRRSASRP) show a composition bias toward basic residues. Phosphoserine occurs at positions 1124 and 1128. Basic and acidic residues-rich tracts occupy residues 1141 to 1151 (RSHERPDRKES) and 1181 to 1198 (REKW…KGAV). Residues Ser1202 and Ser1229 each carry the phosphoserine modification. Low complexity predominate over residues 1284 to 1297 (DDMSSPPSPESTDS). A compositionally biased stretch (basic and acidic residues) spans 1345-1356 (HLLRPDAAEKAE). Phosphoserine occurs at positions 1359, 1360, and 1371. Phosphothreonine is present on Thr1404. Disordered regions lie at residues 1407 to 1439 (LQES…WDME), 1455 to 1486 (FPSH…AQPS), 1526 to 1556 (TPAS…EKTK), and 1630 to 1649 (MRRH…GAEG). The segment covering 1531-1540 (PASQATAASN) has biased composition (polar residues). The segment covering 1541–1556 (SEEKTPAPRLAAEKTK) has biased composition (basic and acidic residues). The stretch at 1549–1579 (RLAAEKTKKEEYMKKLHMQERAVEEVKLAIK) forms a coiled coil.

Interacts with POLR2A (via the C-terminal domain).

The protein is PHD and RING finger domain-containing protein 1 (PHRF1) of Homo sapiens (Human).